A 397-amino-acid polypeptide reads, in one-letter code: Tyrosine--tRNA ligase (397 aa).

A 'HIGH' region motif is present at residues 41 to 50 (PTAPDLHLGH). The 'KMSKS' region motif lies at 225–229 (KMSKS). K228 contacts ATP. The 57-residue stretch at 340–396 (AFLADSGLAGSRGEAKRLIKQGALSLDGEKLDDPNTPLTAGEYVVRLGKKRFLRLIV) folds into the S4 RNA-binding domain.

It belongs to the class-I aminoacyl-tRNA synthetase family. TyrS type 2 subfamily. In terms of assembly, homodimer.

It is found in the cytoplasm. The enzyme catalyses tRNA(Tyr) + L-tyrosine + ATP = L-tyrosyl-tRNA(Tyr) + AMP + diphosphate + H(+). Catalyzes the attachment of tyrosine to tRNA(Tyr) in a two-step reaction: tyrosine is first activated by ATP to form Tyr-AMP and then transferred to the acceptor end of tRNA(Tyr). The protein is Tyrosine--tRNA ligase of Oleidesulfovibrio alaskensis (strain ATCC BAA-1058 / DSM 17464 / G20) (Desulfovibrio alaskensis).